A 617-amino-acid chain; its full sequence is Chaperone protein HscA homolog (617 aa).

It belongs to the heat shock protein 70 family.

Functionally, chaperone involved in the maturation of iron-sulfur cluster-containing proteins. Has a low intrinsic ATPase activity which is markedly stimulated by HscB. The chain is Chaperone protein HscA homolog from Photobacterium profundum (strain SS9).